The chain runs to 149 residues: Protein FAM72A (149 aa).

It belongs to the FAM72 family. Interacts with UNG. May be up-regulated in malignant colon cancers, compared to normal colon and colon adenomas. Expression is also elevated in other common cancer types, including breast, lung, uterus, and ovary.

It localises to the cytoplasm. The protein resides in the mitochondrion. Functionally, may play a role in the regulation of cellular reactive oxygen species metabolism. May participate in cell growth regulation. This is Protein FAM72A (FAM72A) from Homo sapiens (Human).